Here is a 184-residue protein sequence, read N- to C-terminus: Bifunctional protein PyrR (184 aa).

Residues 99-111 (IVLVDDVLYTGRT) carry the PRPP-binding motif.

Belongs to the purine/pyrimidine phosphoribosyltransferase family. PyrR subfamily. In terms of assembly, homodimer and homohexamer; in equilibrium.

The catalysed reaction is UMP + diphosphate = 5-phospho-alpha-D-ribose 1-diphosphate + uracil. Its function is as follows. Regulates transcriptional attenuation of the pyrimidine nucleotide (pyr) operon by binding in a uridine-dependent manner to specific sites on pyr mRNA. This disrupts an antiterminator hairpin in the RNA and favors formation of a downstream transcription terminator, leading to a reduced expression of downstream genes. In terms of biological role, also displays a weak uracil phosphoribosyltransferase activity which is not physiologically significant. The chain is Bifunctional protein PyrR from Acetivibrio thermocellus (strain ATCC 27405 / DSM 1237 / JCM 9322 / NBRC 103400 / NCIMB 10682 / NRRL B-4536 / VPI 7372) (Clostridium thermocellum).